The following is a 361-amino-acid chain: Phospho-N-acetylmuramoyl-pentapeptide-transferase (361 aa).

Helical transmembrane passes span 26–46, 73–93, 98–118, 139–159, 168–188, 200–220, 237–257, 264–284, 289–309, and 339–359; these read SILA…VLIQ, TMGG…WGDL, VWLV…DDWI, IFGL…AAVT, IALP…IVGF, GLAI…AYAS, AGDL…FLWF, VFMG…IAVI, LVLV…IIQV, and VIVR…ATLK.

It belongs to the glycosyltransferase 4 family. MraY subfamily. Requires Mg(2+) as cofactor.

The protein localises to the cell inner membrane. It carries out the reaction UDP-N-acetyl-alpha-D-muramoyl-L-alanyl-gamma-D-glutamyl-meso-2,6-diaminopimeloyl-D-alanyl-D-alanine + di-trans,octa-cis-undecaprenyl phosphate = di-trans,octa-cis-undecaprenyl diphospho-N-acetyl-alpha-D-muramoyl-L-alanyl-D-glutamyl-meso-2,6-diaminopimeloyl-D-alanyl-D-alanine + UMP. The protein operates within cell wall biogenesis; peptidoglycan biosynthesis. Catalyzes the initial step of the lipid cycle reactions in the biosynthesis of the cell wall peptidoglycan: transfers peptidoglycan precursor phospho-MurNAc-pentapeptide from UDP-MurNAc-pentapeptide onto the lipid carrier undecaprenyl phosphate, yielding undecaprenyl-pyrophosphoryl-MurNAc-pentapeptide, known as lipid I. This chain is Phospho-N-acetylmuramoyl-pentapeptide-transferase, found in Xylella fastidiosa (strain 9a5c).